Consider the following 359-residue polypeptide: snRNA-activating protein complex subunit 2 (359 aa).

Residues 1–11 show a composition bias toward basic residues; sequence MKPPQRRRRVP. Disordered stretches follow at residues 1–22, 157–221, and 291–327; these read MKPP…TGPT, NQDG…GSST, and TALP…SEPI.

Part of the SNAPc complex composed of 5 subunits: SNAPC1, SNAPC2, SNAPC3, SNAPC4 and SNAPC5. SNAPC2 interacts with TBP and SNAPC4.

It localises to the nucleus. In terms of biological role, part of the SNAPc complex required for the transcription of both RNA polymerase II and III small-nuclear RNA genes. Binds to the proximal sequence element (PSE), a non-TATA-box basal promoter element common to these 2 types of genes. Recruits TBP and BRF2 to the U6 snRNA TATA box. This Mus musculus (Mouse) protein is snRNA-activating protein complex subunit 2 (Snapc2).